The primary structure comprises 290 residues: 3-deoxy-manno-octulosonate cytidylyltransferase, mitochondrial (290 aa).

Residues 1–50 (MSVCSSSSSSQKTWIVNGILAGTAIAAAIGARAYLGRSKKFRSRVVGIIP) constitute a mitochondrion transit peptide.

Belongs to the KdsB family. Mg(2+) is required as a cofactor. Expressed in roots, leaves, stems and siliques.

Its subcellular location is the mitochondrion outer membrane. It catalyses the reaction 3-deoxy-alpha-D-manno-oct-2-ulosonate + CTP = CMP-3-deoxy-beta-D-manno-octulosonate + diphosphate. Its pathway is nucleotide-sugar biosynthesis; CMP-3-deoxy-D-manno-octulosonate biosynthesis; CMP-3-deoxy-D-manno-octulosonate from 3-deoxy-D-manno-octulosonate and CTP: step 1/1. Inhibited by 2beta-deoxy-Kdo. Catalyzes the production of the sugar nucleotide CMP-3-deoxy-D-manno-octulosonate (CMP-KDO). CTP is the preferred nucleotide donor, but it can partially be replaced with UTP. Activates KDO during the biosynthesis of rhamnogalacturonan II (RG-II), a structurally complex pectic polysaccharide of the primary cell wall. RG-II is essential for the cell wall integrity of rapidly growing tissues and pollen tube growth and elongation. The polypeptide is 3-deoxy-manno-octulosonate cytidylyltransferase, mitochondrial (Arabidopsis thaliana (Mouse-ear cress)).